The sequence spans 30 residues: L-amino-acid oxidase (30 aa).

This sequence belongs to the flavin monoamine oxidase family. FIG1 subfamily. As to quaternary structure, monomer. This is in contrast with most of its orthologs, that are non-covalently linked homodimers. FAD serves as cofactor. N-glycosylated. Expressed by the venom gland.

The protein localises to the secreted. The catalysed reaction is an L-alpha-amino acid + O2 + H2O = a 2-oxocarboxylate + H2O2 + NH4(+). It catalyses the reaction L-leucine + O2 + H2O = 4-methyl-2-oxopentanoate + H2O2 + NH4(+). It carries out the reaction L-phenylalanine + O2 + H2O = 3-phenylpyruvate + H2O2 + NH4(+). The enzyme catalyses L-tryptophan + O2 + H2O = indole-3-pyruvate + H2O2 + NH4(+). The catalysed reaction is L-methionine + O2 + H2O = 4-methylsulfanyl-2-oxobutanoate + H2O2 + NH4(+). It catalyses the reaction L-2-aminohexanoate + O2 + H2O = 2-oxohexanoate + H2O2 + NH4(+). It carries out the reaction L-tyrosine + O2 + H2O = 3-(4-hydroxyphenyl)pyruvate + H2O2 + NH4(+). Functionally, catalyzes an oxidative deamination of predominantly hydrophobic and aromatic L-amino acids, thus producing hydrogen peroxide that may contribute to the diverse toxic effects of this enzyme. Is highly active against L-Met, L-Leu, L-norleucine (L-2-aminohexanoate), L-Trp, L-Phe, moderately active against L-Tyr, and no active on L-Gly, L-Ala, L-Val, L-Pro, L-His, L-Lys, L-Arg, L-Asp, L-Asn, L-Gln, L-Glu, L-Ser, and L-Thr. Exhibits diverse biological activities, such as hemorrhage, hemolysis, edema, antibacterial and antiparasitic activities. In addition, this protein induces apoptosis. It also interacts with endothelial cells, and inhibits collagen- and ADP-induced platelet aggregation. L-LAAO family effects on platelets are controversial, since it either induces aggregation or inhibits agonist-induced aggregation. These different effects are probably due to different experimental conditions. This Bothrops leucurus (Whitetail lancehead) protein is L-amino-acid oxidase.